A 397-amino-acid polypeptide reads, in one-letter code: Nuclear pore complex-interacting protein family member B2 (397 aa).

Residues 256–397 (NRMGHQPPPP…KLRTGHCTQA (142 aa)) are disordered. Residues 267–277 (QQHSITDNSLS) show a composition bias toward polar residues. A compositionally biased stretch (low complexity) spans 278–287 (LKTPPECLLT). Over residues 382 to 391 (KRRRLSKLRT) the composition is skewed to basic residues.

Belongs to the NPIP family.

It is found in the nucleus. This chain is Nuclear pore complex-interacting protein family member B2, found in Homo sapiens (Human).